Reading from the N-terminus, the 556-residue chain is Testis-specific protein 10-interacting protein (556 aa).

Polar residues predominate over residues 1–20 (MGQETNMLNAHQQLVRTSSG). 2 disordered regions span residues 1–102 (MGQE…SPRK) and 180–320 (CTSI…GPWD). Positions 75 to 85 (KDRRLRGRNKK) are enriched in basic residues. Acidic residues-rich tracts occupy residues 213–225 (EPEESEPEGLGAE) and 246–260 (LEEEQFSEATEEAED). The segment covering 266–278 (PWRRRTSSRRKGR) has biased composition (basic residues). Over residues 304-320 (EPQRRKPRAKELEGPWD) the composition is skewed to basic and acidic residues. Residues 387–463 (LRAWELQQRE…ELQGIQHRVQ (77 aa)) adopt a coiled-coil conformation. A disordered region spans residues 503–556 (AGKRDMEGAPRRHRSHRSVGARMEPSSQSPPKMEPTGSQADQHFAPNPDQELSP). Polar residues predominate over residues 527–543 (PSSQSPPKMEPTGSQAD).

The protein is Testis-specific protein 10-interacting protein (TSGA10IP) of Bos taurus (Bovine).